Here is a 95-residue protein sequence, read N- to C-terminus: N(2)-fixation sustaining protein CowN (95 aa).

The protein belongs to the CowN family.

Is required to sustain N(2)-dependent growth in the presence of low levels of carbon monoxide (CO). Probably acts by protecting the N(2) fixation ability of the nitrogenase complex, which is inactivated in the presence of CO. This is N(2)-fixation sustaining protein CowN from Allochromatium vinosum (strain ATCC 17899 / DSM 180 / NBRC 103801 / NCIMB 10441 / D) (Chromatium vinosum).